The chain runs to 242 residues: Glutamate transport ATP-binding protein GluA (242 aa).

The 235-residue stretch at 2–236 folds into the ABC transporter domain; it reads IKMTGVQKYF…PKSDRAKDFL (235 aa). 34–41 lines the ATP pocket; sequence GPSGSGKS.

This sequence belongs to the ABC transporter superfamily. As to quaternary structure, the complex is composed of two ATP-binding proteins (GluA), two transmembrane proteins (GluC and GluD) and a solute-binding protein (GluB).

The protein resides in the cell membrane. It catalyses the reaction a polar amino acid(out) + ATP + H2O = a polar amino acid(in) + ADP + phosphate + H(+). It carries out the reaction L-glutamate(out) + ATP + H2O = L-glutamate(in) + ADP + phosphate + H(+). In terms of biological role, part of the ABC transporter complex GluABCD involved in glutamate uptake. Probably responsible for energy coupling to the transport system. This chain is Glutamate transport ATP-binding protein GluA, found in Corynebacterium glutamicum (strain ATCC 13032 / DSM 20300 / JCM 1318 / BCRC 11384 / CCUG 27702 / LMG 3730 / NBRC 12168 / NCIMB 10025 / NRRL B-2784 / 534).